A 107-amino-acid chain; its full sequence is Nucleoid-associated protein RBE_0048 (107 aa).

This sequence belongs to the YbaB/EbfC family. Homodimer.

It is found in the cytoplasm. The protein resides in the nucleoid. In terms of biological role, binds to DNA and alters its conformation. May be involved in regulation of gene expression, nucleoid organization and DNA protection. In Rickettsia bellii (strain RML369-C), this protein is Nucleoid-associated protein RBE_0048.